We begin with the raw amino-acid sequence, 56 residues long: Large ribosomal subunit protein bL32 (56 aa).

Residues 1–38 (MAVQQNKKSRSRRDMRRSHDALTTAAVSVDKTSGETHL) form a disordered region. Basic residues predominate over residues 7–16 (KKSRSRRDMR).

The protein belongs to the bacterial ribosomal protein bL32 family.

In Histophilus somni (strain 129Pt) (Haemophilus somnus), this protein is Large ribosomal subunit protein bL32.